A 183-amino-acid chain; its full sequence is Probable chemoreceptor glutamine deamidase CheD (183 aa).

This sequence belongs to the CheD family.

The catalysed reaction is L-glutaminyl-[protein] + H2O = L-glutamyl-[protein] + NH4(+). Probably deamidates glutamine residues to glutamate on methyl-accepting chemotaxis receptors (MCPs), playing an important role in chemotaxis. The polypeptide is Probable chemoreceptor glutamine deamidase CheD (Sinorhizobium medicae (strain WSM419) (Ensifer medicae)).